The primary structure comprises 122 residues: S-adenosylmethionine decarboxylase proenzyme (122 aa).

Ser-69 acts as the Schiff-base intermediate with substrate; via pyruvic acid in catalysis. Ser-69 carries the post-translational modification Pyruvic acid (Ser); by autocatalysis. His-74 functions as the Proton acceptor; for processing activity in the catalytic mechanism. Cys-89 serves as the catalytic Proton donor; for catalytic activity.

The protein belongs to the prokaryotic AdoMetDC family. Type 1 subfamily. In terms of assembly, heterotetramer of two alpha and two beta chains arranged as a dimer of alpha/beta heterodimers. It depends on pyruvate as a cofactor. Is synthesized initially as an inactive proenzyme. Formation of the active enzyme involves a self-maturation process in which the active site pyruvoyl group is generated from an internal serine residue via an autocatalytic post-translational modification. Two non-identical subunits are generated from the proenzyme in this reaction, and the pyruvate is formed at the N-terminus of the alpha chain, which is derived from the carboxyl end of the proenzyme. The post-translation cleavage follows an unusual pathway, termed non-hydrolytic serinolysis, in which the side chain hydroxyl group of the serine supplies its oxygen atom to form the C-terminus of the beta chain, while the remainder of the serine residue undergoes an oxidative deamination to produce ammonia and the pyruvoyl group blocking the N-terminus of the alpha chain.

The catalysed reaction is S-adenosyl-L-methionine + H(+) = S-adenosyl 3-(methylsulfanyl)propylamine + CO2. It functions in the pathway amine and polyamine biosynthesis; S-adenosylmethioninamine biosynthesis; S-adenosylmethioninamine from S-adenosyl-L-methionine: step 1/1. Its function is as follows. Catalyzes the decarboxylation of S-adenosylmethionine to S-adenosylmethioninamine (dcAdoMet), the propylamine donor required for the synthesis of the polyamines spermine and spermidine from the diamine putrescine. This chain is S-adenosylmethionine decarboxylase proenzyme, found in Sulfurisphaera tokodaii (strain DSM 16993 / JCM 10545 / NBRC 100140 / 7) (Sulfolobus tokodaii).